We begin with the raw amino-acid sequence, 208 residues long: Anti-sigma-W factor RsiW (208 aa).

At 1–87 the chain is on the cytoplasmic side; the sequence is MSCPEQIVQL…ASVKRWFRTH (87 aa). Positions 3, 30, 34, and 37 each coordinate Zn(2+). Residues 88–108 form a helical membrane-spanning segment; that stretch reads PVIAAAAVFIILMGGGFFNSW. The Extracellular segment spans residues 109–208; that stretch reads HNDHNFSVSK…LDAFNPNGEE (100 aa).

It belongs to the zinc-associated anti-sigma factor (ZAS) superfamily. Anti-sigma-W factor family. In terms of assembly, forms a heterodimer with cognate sigma factor SigW, which probably prevents SigW from binding to DNA. The cofactor is Zn(2+). Post-translationally, is processed by successive proteolytic events. First, the extracellular region of RsiW is cleaved by PrsW (site-1 cleavage) in response to cell envelope stresses. In a reconstituted E.coli system PrsW cuts between Ala-168 and Ser-169 followed by trimming by E.coli Tsp; the endogenous extracellular exopeptidase responsible for the event in B.subtilis has not been identified. Next, it undergoes cleavage at an intramembrane site (site-2 cleavage) mediated by RasP. This cleavage uncovers a cryptic proteolytic tag with conserved alanine residues in the transmembrane segment, that is recognized mainly by the ClpXP protease, which completely degrades the protein in the cytoplasm and leads to the induction of the sigma-W-controlled genes.

The protein localises to the cell membrane. Functionally, the anti-sigma factor for extracytoplasmic function (ECF) sigma factor sigma-W (SigW). Holds SigW, its cognate ECF sigma factor, in an inactive form until released by regulated intramembrane proteolysis (RIP). SigW and RsiW mediate cell response to cell wall stress. RIP occurs when an extracytoplasmic signal triggers a concerted proteolytic cascade to transmit information and elicit cellular responses. The membrane-spanning regulatory substrate protein is first cut periplasmically (site-1 protease, S1P, PrsW), then within the membrane itself (site-2 protease, S2P, RasP), while cytoplasmic proteases finish degrading the anti-sigma factor, liberating sigma-W. This Bacillus subtilis (strain 168) protein is Anti-sigma-W factor RsiW (rsiW).